We begin with the raw amino-acid sequence, 269 residues long: Centromere protein K (269 aa).

Over residues 1–10 (MNQEDLDPDS) the composition is skewed to acidic residues. Positions 1–20 (MNQEDLDPDSTTDVGDVTNT) are disordered. 2 coiled-coil regions span residues 22–42 (EELI…QNKL) and 98–151 (QKLR…NKVE).

Belongs to the CENP-K/MCM22 family. Component of the CENPA-CAD complex, composed of CENPI, CENPK, CENPL, CENPO, CENPP, CENPQ, CENPR and CENPS. The CENPA-CAD complex interacts with the CENPA-NAC complex, at least composed of CENPA, CENPC, CENPH, CENPM, CENPN, CENPT and CENPU. Interacts directly with CENPH. As to expression, detected in several fetal organs with highest levels in fetal liver. In adults, it is weakly expressed in lung and placenta.

It localises to the nucleus. The protein resides in the chromosome. It is found in the centromere. Its subcellular location is the kinetochore. Functionally, component of the CENPA-CAD (nucleosome distal) complex, a complex recruited to centromeres which is involved in assembly of kinetochore proteins, mitotic progression and chromosome segregation. May be involved in incorporation of newly synthesized CENPA into centromeres via its interaction with the CENPA-NAC complex. Acts in coordination with KNL1 to recruit the NDC80 complex to the outer kinetochore. The chain is Centromere protein K (CENPK) from Homo sapiens (Human).